Reading from the N-terminus, the 140-residue chain is uncharacterized protein (140 aa).

This is an uncharacterized protein from Spirochaeta aurantia.